Consider the following 156-residue polypeptide: Small ribosomal subunit protein uS7 (156 aa).

It belongs to the universal ribosomal protein uS7 family. Part of the 30S ribosomal subunit. Contacts proteins S9 and S11.

Its function is as follows. One of the primary rRNA binding proteins, it binds directly to 16S rRNA where it nucleates assembly of the head domain of the 30S subunit. Is located at the subunit interface close to the decoding center, probably blocks exit of the E-site tRNA. The sequence is that of Small ribosomal subunit protein uS7 from Mycobacteroides abscessus (strain ATCC 19977 / DSM 44196 / CCUG 20993 / CIP 104536 / JCM 13569 / NCTC 13031 / TMC 1543 / L948) (Mycobacterium abscessus).